The chain runs to 179 residues: Transcription factor 21 (179 aa).

Residues 19–88 form a disordered region; that stretch reads DCDSLKVDSN…VQRNAANARE (70 aa). Composition is skewed to polar residues over residues 30 to 49 and 70 to 80; these read EFGTSNESTEEGSNCENGSP and SGVSQEGKQVQ. Positions 79–131 constitute a bHLH domain; sequence VQRNAANARERARMRVLSKAFSRLKTTLPWVPPDTKLSKLDTLRLASSYIAHL.

As to quaternary structure, efficient DNA binding requires dimerization with another bHLH protein. Forms a heterodimer with TCF3 and binds the E box (5'-CANNTG-3'). In terms of tissue distribution, expressed at high levels in lung, kidney, gut, heart, ovary and podocytes (visceral glomerular epithelial cells). Also found in spleen, large intestine, uterus, bladder and testis.

It localises to the nucleus. Involved in epithelial-mesenchymal interactions in kidney and lung morphogenesis that include epithelial differentiation and branching morphogenesis. May be involved in the organogenesis of the spleen and heart and in cardiac and coronary artery development. May function in the development and sex differentiation of gonad via transcriptional regulation of AD4BP/SF-1. This Mus musculus (Mouse) protein is Transcription factor 21 (Tcf21).